Here is a 141-residue protein sequence, read N- to C-terminus: Nucleoside diphosphate kinase (141 aa).

ATP-binding residues include Lys11, Phe59, Arg87, Thr93, Arg104, and Asn114. Catalysis depends on His117, which acts as the Pros-phosphohistidine intermediate.

The protein belongs to the NDK family. In terms of assembly, homotetramer. Mg(2+) is required as a cofactor.

The protein localises to the cytoplasm. The enzyme catalyses a 2'-deoxyribonucleoside 5'-diphosphate + ATP = a 2'-deoxyribonucleoside 5'-triphosphate + ADP. It catalyses the reaction a ribonucleoside 5'-diphosphate + ATP = a ribonucleoside 5'-triphosphate + ADP. Functionally, major role in the synthesis of nucleoside triphosphates other than ATP. The ATP gamma phosphate is transferred to the NDP beta phosphate via a ping-pong mechanism, using a phosphorylated active-site intermediate. This is Nucleoside diphosphate kinase from Cupriavidus necator (strain ATCC 17699 / DSM 428 / KCTC 22496 / NCIMB 10442 / H16 / Stanier 337) (Ralstonia eutropha).